The primary structure comprises 327 residues: tRNA dimethylallyltransferase (327 aa).

Residue 14–21 participates in ATP binding; it reads GPTASGKT. 16 to 21 is a binding site for substrate; the sequence is TASGKT. 2 interaction with substrate tRNA regions span residues 39-42 and 163-167; these read DSAL and QRIQR.

It belongs to the IPP transferase family. Monomer. The cofactor is Mg(2+).

The enzyme catalyses adenosine(37) in tRNA + dimethylallyl diphosphate = N(6)-dimethylallyladenosine(37) in tRNA + diphosphate. Its function is as follows. Catalyzes the transfer of a dimethylallyl group onto the adenine at position 37 in tRNAs that read codons beginning with uridine, leading to the formation of N6-(dimethylallyl)adenosine (i(6)A). In Xanthomonas euvesicatoria pv. vesicatoria (strain 85-10) (Xanthomonas campestris pv. vesicatoria), this protein is tRNA dimethylallyltransferase.